Reading from the N-terminus, the 206-residue chain is FMN-dependent NADH:quinone oxidoreductase (206 aa).

Residues Ser-10, 16–18 (SSS), 93–96 (MYNF), and 137–140 (TRGG) contribute to the FMN site.

Belongs to the azoreductase type 1 family. As to quaternary structure, homodimer. It depends on FMN as a cofactor.

It catalyses the reaction 2 a quinone + NADH + H(+) = 2 a 1,4-benzosemiquinone + NAD(+). The catalysed reaction is N,N-dimethyl-1,4-phenylenediamine + anthranilate + 2 NAD(+) = 2-(4-dimethylaminophenyl)diazenylbenzoate + 2 NADH + 2 H(+). Functionally, quinone reductase that provides resistance to thiol-specific stress caused by electrophilic quinones. In terms of biological role, also exhibits azoreductase activity. Catalyzes the reductive cleavage of the azo bond in aromatic azo compounds to the corresponding amines. This is FMN-dependent NADH:quinone oxidoreductase from Psychromonas ingrahamii (strain DSM 17664 / CCUG 51855 / 37).